The chain runs to 332 residues: 2,3-diketo-L-gulonate reductase (332 aa).

The active-site Proton donor is histidine 44. NAD(+) is bound by residues 168–174 (ITMVDMS), 224–225 (WK), and 304–306 (GHE).

It belongs to the LDH2/MDH2 oxidoreductase family. DlgD subfamily. As to quaternary structure, homodimer.

Its subcellular location is the cytoplasm. The enzyme catalyses 3-dehydro-L-gulonate + NAD(+) = 2,3-dioxo-L-gulonate + NADH + H(+). The catalysed reaction is 3-dehydro-L-gulonate + NADP(+) = 2,3-dioxo-L-gulonate + NADPH + H(+). In terms of biological role, catalyzes the reduction of 2,3-diketo-L-gulonate in the presence of NADH, to form 3-keto-L-gulonate. This is 2,3-diketo-L-gulonate reductase from Escherichia coli O6:K15:H31 (strain 536 / UPEC).